Consider the following 470-residue polypeptide: Fumarate reductase 1 (470 aa).

6 to 20 (VVVIGTGLAGLAAAN) contributes to the FAD binding site. Ser66 is modified (phosphoserine). Catalysis depends on residues His249 and Arg272.

This sequence belongs to the FAD-dependent oxidoreductase 2 family. FRD/SDH subfamily. Requires FAD as cofactor. The N-terminus is blocked.

It is found in the cytoplasm. The enzyme catalyses succinate + NAD(+) = fumarate + NADH + H(+). Its function is as follows. Irreversibly catalyzes the reduction of fumarate to succinate. Together with the second isozyme of soluble fumarate reductase (OSM1), essential for anaerobic growth. Involved in maintaining redox balance. Reduction of fumarate is the main source of succinate during fermentation, and under anaerobic conditions, the formation of succinate is strictly required for the reoxidation of FADH(2). In Saccharomyces cerevisiae (strain ATCC 204508 / S288c) (Baker's yeast), this protein is Fumarate reductase 1 (FRD1).